A 251-amino-acid polypeptide reads, in one-letter code: Coproheme decarboxylase (251 aa).

Residues arginine 133, 147 to 151 (YPMSK), histidine 174, glutamine 187, and serine 225 each bind Fe-coproporphyrin III. Residue tyrosine 147 is part of the active site.

This sequence belongs to the ChdC family. Type 1 subfamily. Fe-coproporphyrin III is required as a cofactor.

The catalysed reaction is Fe-coproporphyrin III + 2 H2O2 + 2 H(+) = heme b + 2 CO2 + 4 H2O. It catalyses the reaction Fe-coproporphyrin III + H2O2 + H(+) = harderoheme III + CO2 + 2 H2O. It carries out the reaction harderoheme III + H2O2 + H(+) = heme b + CO2 + 2 H2O. It participates in porphyrin-containing compound metabolism; protoheme biosynthesis. Functionally, involved in coproporphyrin-dependent heme b biosynthesis. Catalyzes the decarboxylation of Fe-coproporphyrin III (coproheme) to heme b (protoheme IX), the last step of the pathway. The reaction occurs in a stepwise manner with a three-propionate intermediate. In Listeria welshimeri serovar 6b (strain ATCC 35897 / DSM 20650 / CCUG 15529 / CIP 8149 / NCTC 11857 / SLCC 5334 / V8), this protein is Coproheme decarboxylase.